The sequence spans 322 residues: Tubulin alpha-4 chain (322 aa).

GTP-binding residues include Ser15, Gly19, Thr20, Thr54, Asn81, and Asn103. The active site involves Glu129.

Belongs to the tubulin family. In terms of assembly, dimer of alpha and beta chains. A typical microtubule is a hollow water-filled tube with an outer diameter of 25 nm and an inner diameter of 15 nM. Alpha-beta heterodimers associate head-to-tail to form protofilaments running lengthwise along the microtubule wall with the beta-tubulin subunit facing the microtubule plus end conferring a structural polarity. Microtubules usually have 13 protofilaments but different protofilament numbers can be found in some organisms and specialized cells. Mg(2+) serves as cofactor. Some glutamate residues at the C-terminus are polyglycylated, resulting in polyglycine chains on the gamma-carboxyl group. Glycylation is mainly limited to tubulin incorporated into axonemes (cilia and flagella) whereas glutamylation is prevalent in neuronal cells, centrioles, axonemes, and the mitotic spindle. Both modifications can coexist on the same protein on adjacent residues, and lowering polyglycylation levels increases polyglutamylation, and reciprocally. The precise function of polyglycylation is still unclear. In terms of processing, some glutamate residues at the C-terminus are polyglutamylated, resulting in polyglutamate chains on the gamma-carboxyl group. Polyglutamylation plays a key role in microtubule severing by spastin (SPAST). SPAST preferentially recognizes and acts on microtubules decorated with short polyglutamate tails: severing activity by SPAST increases as the number of glutamates per tubulin rises from one to eight, but decreases beyond this glutamylation threshold.

The protein resides in the cytoplasm. Its subcellular location is the cytoskeleton. It carries out the reaction GTP + H2O = GDP + phosphate + H(+). In terms of biological role, tubulin is the major constituent of microtubules, a cylinder consisting of laterally associated linear protofilaments composed of alpha- and beta-tubulin heterodimers. Microtubules grow by the addition of GTP-tubulin dimers to the microtubule end, where a stabilizing cap forms. Below the cap, tubulin dimers are in GDP-bound state, owing to GTPase activity of alpha-tubulin. The protein is Tubulin alpha-4 chain of Gallus gallus (Chicken).